Consider the following 25-residue polypeptide: Alpha-amylase inhibitor (25 aa).

Monomer or homodimer. Post-translationally, may exist both in a glycosylated and in an unglycosylated form.

Its subcellular location is the secreted. In terms of biological role, inhibits alpha-amylases but not trypsin. Is more effective against insect alpha-amylases than those of mammals. The polypeptide is Alpha-amylase inhibitor (Secale cereale (Rye)).